A 61-amino-acid chain; its full sequence is Cytotoxin 3 (61 aa).

Disulfide bonds link Cys-3-Cys-22, Cys-15-Cys-39, Cys-43-Cys-54, and Cys-55-Cys-60.

This sequence belongs to the three-finger toxin family. Short-chain subfamily. Type IB cytotoxin sub-subfamily. In terms of tissue distribution, expressed by the venom gland.

It localises to the secreted. Its function is as follows. This protein lyses red blood cells and has cardiotoxic and hypotensive activities. This is Cytotoxin 3 from Hemachatus haemachatus (Rinkhals).